We begin with the raw amino-acid sequence, 901 residues long: Protein translocase subunit SecA (901 aa).

Residues Gln-85, 103–107, and Asp-510 each bind ATP; that span reads GEGKT. Positions 836-845 are enriched in basic and acidic residues; sequence EEAERARQEM. The interval 836–901 is disordered; that stretch reads EEAERARQEM…HCHGSRVARQ (66 aa). Residues 849-866 are compositionally biased toward polar residues; sequence INQNNLPVDENSQTTQNS. Positions 882, 884, 893, and 894 each coordinate Zn(2+). The span at 888-901 shows a compositional bias: basic residues; sequence KKYKHCHGSRVARQ.

Belongs to the SecA family. Monomer and homodimer. Part of the essential Sec protein translocation apparatus which comprises SecA, SecYEG and auxiliary proteins SecDF-YajC and YidC. Requires Zn(2+) as cofactor.

The protein localises to the cell inner membrane. It localises to the cytoplasm. The catalysed reaction is ATP + H2O + cellular proteinSide 1 = ADP + phosphate + cellular proteinSide 2.. Functionally, part of the Sec protein translocase complex. Interacts with the SecYEG preprotein conducting channel. Has a central role in coupling the hydrolysis of ATP to the transfer of proteins into and across the cell membrane, serving both as a receptor for the preprotein-SecB complex and as an ATP-driven molecular motor driving the stepwise translocation of polypeptide chains across the membrane. This is Protein translocase subunit SecA from Haemophilus influenzae (strain PittEE).